Reading from the N-terminus, the 418-residue chain is Tyrosine--tRNA ligase (418 aa).

Residue Tyr-34 participates in L-tyrosine binding. The short motif at 39–48 (PTADSLHLGH) is the 'HIGH' region element. Tyr-169 and Gln-173 together coordinate L-tyrosine. A 'KMSKS' region motif is present at residues 229 to 233 (KFGKS). Residue Lys-232 coordinates ATP. The 67-residue stretch at 352–418 (LNIVDMLVTA…GKKKYAVLTY (67 aa)) folds into the S4 RNA-binding domain.

The protein belongs to the class-I aminoacyl-tRNA synthetase family. TyrS type 1 subfamily. As to quaternary structure, homodimer.

The protein resides in the cytoplasm. The enzyme catalyses tRNA(Tyr) + L-tyrosine + ATP = L-tyrosyl-tRNA(Tyr) + AMP + diphosphate + H(+). Functionally, catalyzes the attachment of tyrosine to tRNA(Tyr) in a two-step reaction: tyrosine is first activated by ATP to form Tyr-AMP and then transferred to the acceptor end of tRNA(Tyr). This chain is Tyrosine--tRNA ligase, found in Streptococcus equi subsp. zooepidemicus (strain MGCS10565).